A 176-amino-acid polypeptide reads, in one-letter code: Translation initiation factor IF-3 (176 aa).

Belongs to the IF-3 family. Monomer.

It is found in the cytoplasm. IF-3 binds to the 30S ribosomal subunit and shifts the equilibrium between 70S ribosomes and their 50S and 30S subunits in favor of the free subunits, thus enhancing the availability of 30S subunits on which protein synthesis initiation begins. The sequence is that of Translation initiation factor IF-3 from Microcystis aeruginosa (strain NIES-843 / IAM M-2473).